A 631-amino-acid chain; its full sequence is Glutamyl-tRNA(Gln) amidotransferase subunit E (631 aa).

The protein belongs to the GatB/GatE family. GatE subfamily. Heterodimer of GatD and GatE.

The catalysed reaction is L-glutamyl-tRNA(Gln) + L-glutamine + ATP + H2O = L-glutaminyl-tRNA(Gln) + L-glutamate + ADP + phosphate + H(+). Allows the formation of correctly charged Gln-tRNA(Gln) through the transamidation of misacylated Glu-tRNA(Gln) in organisms which lack glutaminyl-tRNA synthetase. The reaction takes place in the presence of glutamine and ATP through an activated gamma-phospho-Glu-tRNA(Gln). The GatDE system is specific for glutamate and does not act on aspartate. This is Glutamyl-tRNA(Gln) amidotransferase subunit E from Methanococcus maripaludis (strain C5 / ATCC BAA-1333).